Here is a 1165-residue protein sequence, read N- to C-terminus: DNA-directed RNA polymerase subunit beta (1165 aa).

Belongs to the RNA polymerase beta chain family. In terms of assembly, the RNAP catalytic core consists of 2 alpha, 1 beta, 1 beta' and 1 omega subunit. When a sigma factor is associated with the core the holoenzyme is formed, which can initiate transcription.

It carries out the reaction RNA(n) + a ribonucleoside 5'-triphosphate = RNA(n+1) + diphosphate. Its function is as follows. DNA-dependent RNA polymerase catalyzes the transcription of DNA into RNA using the four ribonucleoside triphosphates as substrates. The chain is DNA-directed RNA polymerase subunit beta from Leifsonia xyli subsp. xyli (strain CTCB07).